Consider the following 797-residue polypeptide: Kinesin-like protein KIF18B (797 aa).

The 342-residue stretch at Thr-11–Ile-352 folds into the Kinesin motor domain. Gly-110–Thr-117 contributes to the ATP binding site. Residues Ile-367 to Ile-402 adopt a coiled-coil conformation. Disordered stretches follow at residues Glu-412 to Leu-476, Ala-528 to Pro-564, Leu-579 to Gln-640, and Lys-730 to Arg-797. The segment covering Met-594–Thr-608 has biased composition (polar residues). Low complexity predominate over residues Gly-731–Ser-744.

The protein belongs to the TRAFAC class myosin-kinesin ATPase superfamily. Kinesin family.

It is found in the nucleus. The protein resides in the cytoplasm. Its subcellular location is the cytoskeleton. May play an important role in microtubule plus-end depolymerizing activity in mitotic cells. The chain is Kinesin-like protein KIF18B (KIF18B) from Gallus gallus (Chicken).